Here is a 433-residue protein sequence, read N- to C-terminus: Protein translocase subunit SecY (433 aa).

10 consecutive transmembrane segments (helical) span residues 17–37 (IIFT…PIPG), 71–91 (IFAL…LMSV), 117–137 (LTVL…ESMV), 141–161 (GPVV…TLVV), 184–204 (LIIF…MFEL), 212–232 (PLIA…IIFF), 268–288 (GVIP…LANF), 310–330 (YILL…AIVF), 366–386 (LTVI…LLMN), and 388–408 (YVIS…VVLD).

The protein belongs to the SecY/SEC61-alpha family. In terms of assembly, component of the Sec protein translocase complex. Heterotrimer consisting of SecY, SecE and SecG subunits. The heterotrimers can form oligomers, although 1 heterotrimer is thought to be able to translocate proteins. Interacts with the ribosome. Interacts with SecDF, and other proteins may be involved. Interacts with SecA.

Its subcellular location is the cell inner membrane. Its function is as follows. The central subunit of the protein translocation channel SecYEG. Consists of two halves formed by TMs 1-5 and 6-10. These two domains form a lateral gate at the front which open onto the bilayer between TMs 2 and 7, and are clamped together by SecE at the back. The channel is closed by both a pore ring composed of hydrophobic SecY resides and a short helix (helix 2A) on the extracellular side of the membrane which forms a plug. The plug probably moves laterally to allow the channel to open. The ring and the pore may move independently. This chain is Protein translocase subunit SecY, found in Rickettsia typhi (strain ATCC VR-144 / Wilmington).